The sequence spans 310 residues: Mycothiol acetyltransferase (310 aa).

N-acetyltransferase domains lie at 5–155 (TTVE…HPAR) and 160–309 (PPFR…LPAA). 80-82 (LLV) is a binding site for acetyl-CoA. D187, K226, and E238 together coordinate 1D-myo-inositol 2-(L-cysteinylamino)-2-deoxy-alpha-D-glucopyranoside. 242 to 244 (IAT) is a binding site for acetyl-CoA. A 1D-myo-inositol 2-(L-cysteinylamino)-2-deoxy-alpha-D-glucopyranoside-binding site is contributed by Y276. 281–286 (NERALR) contacts acetyl-CoA.

Belongs to the acetyltransferase family. MshD subfamily. As to quaternary structure, monomer.

The enzyme catalyses 1D-myo-inositol 2-(L-cysteinylamino)-2-deoxy-alpha-D-glucopyranoside + acetyl-CoA = mycothiol + CoA + H(+). In terms of biological role, catalyzes the transfer of acetyl from acetyl-CoA to desacetylmycothiol (Cys-GlcN-Ins) to form mycothiol. This Acidimicrobium ferrooxidans (strain DSM 10331 / JCM 15462 / NBRC 103882 / ICP) protein is Mycothiol acetyltransferase.